A 213-amino-acid chain; its full sequence is A-type ATP synthase subunit D (213 aa).

This sequence belongs to the V-ATPase D subunit family. In terms of assembly, has multiple subunits with at least A(3), B(3), C, D, E, F, H, I and proteolipid K(x).

It localises to the cell membrane. Its function is as follows. Component of the A-type ATP synthase that produces ATP from ADP in the presence of a proton gradient across the membrane. In Thermoplasma acidophilum (strain ATCC 25905 / DSM 1728 / JCM 9062 / NBRC 15155 / AMRC-C165), this protein is A-type ATP synthase subunit D.